The primary structure comprises 398 residues: Apolipoprotein L1 (398 aa).

The signal sequence occupies residues 1–27 (MEGAALLRVSVLCIWMSALFLGVGVRA). Residues 35–47 (QQNVPSGTDTGDP) show a composition bias toward polar residues. Residues 35 to 55 (QQNVPSGTDTGDPQSKPLGDW) are disordered. N-linked (GlcNAc...) asparagine glycosylation occurs at asparagine 261. A disordered region spans residues 297 to 317 (PHASASRPRVTEPISAESGEQ). Phosphoserine; by FAM20C is present on residues serine 311 and serine 314.

This sequence belongs to the apolipoprotein L family. As to quaternary structure, in plasma, interacts with APOA1 and mainly associated with large high density lipoprotein particles. Phosphorylated by FAM20C in the extracellular medium. As to expression, plasma. Found on APOA-I-containing high density lipoprotein (HDL3). Expressed in pancreas, lung, prostate, liver, placenta and spleen.

It localises to the secreted. In terms of biological role, may play a role in lipid exchange and transport throughout the body. May participate in reverse cholesterol transport from peripheral cells to the liver. In Homo sapiens (Human), this protein is Apolipoprotein L1 (APOL1).